Here is an 868-residue protein sequence, read N- to C-terminus: LPS-assembly protein LptD (868 aa).

Positions 1-24 are cleaved as a signal peptide; it reads MLKGIHKYLLMCFGTVLFTVQANA.

Belongs to the LptD family. In terms of assembly, component of the lipopolysaccharide transport and assembly complex. Interacts with LptE and LptA.

The protein localises to the cell outer membrane. Together with LptE, is involved in the assembly of lipopolysaccharide (LPS) at the surface of the outer membrane. The protein is LPS-assembly protein LptD of Francisella tularensis subsp. holarctica (strain LVS).